The sequence spans 585 residues: Amyloid protein-binding protein 2 (585 aa).

TPR repeat units lie at residues 50-83 (QGRL…HHCF), 120-153 (IQVG…CTLH), 206-239 (AALY…ITSG), 288-321 (SDTL…RQSV), 333-367 (HEDL…ITHI), 429-462 (AKHY…KEQL), 471-505 (ALSV…GKKL), and 514-547 (EYDY…NRLR).

As to quaternary structure, component of a CRL2 E3 ubiquitin-protein ligase complex, also named ECS (Elongin BC-CUL2/5-SOCS-box protein) complex, composed of CUL2, Elongin BC (ELOB and ELOC), RBX1 and substrate-specific adapter APPBP2. Interacts with APP; APP interaction inhibits the E3 ubiquitin-protein ligase activity of the CRL2(APPBP2) complex. In terms of processing, rapidly degraded by the proteasome upon overexpression of a C-terminal fragment of APP.

The protein localises to the nucleus. It is found in the cytoplasm. The protein resides in the cytoskeleton. Its subcellular location is the membrane. It functions in the pathway protein modification; protein ubiquitination. Its activity is regulated as follows. E3 ubiquitin-protein ligase activity of the CRL2(APPBP2) complex is inhibited by APP. Substrate-recognition component of a Cul2-RING (CRL2) E3 ubiquitin-protein ligase complex of the DesCEND (destruction via C-end degrons) pathway, which recognizes a C-degron located at the extreme C terminus of target proteins, leading to their ubiquitination and degradation. The C-degron recognized by the DesCEND pathway is usually a motif of less than ten residues and can be present in full-length proteins, truncated proteins or proteolytically cleaved forms. The CRL2(APPBP2) complex specifically recognizes proteins with a -Arg-Xaa-Xaa-Gly degron at the C-terminus, leading to their ubiquitination and degradation. The CRL2(APPBP2) complex mediates ubiquitination and degradation of truncated SELENOV selenoproteins produced by failed UGA/Sec decoding, which end with a -Arg-Xaa-Xaa-Gly degron. May play a role in intracellular protein transport: may be involved in the translocation of APP along microtubules toward the cell surface. The polypeptide is Amyloid protein-binding protein 2 (Rattus norvegicus (Rat)).